The primary structure comprises 185 residues: Probable nicotinate-nucleotide adenylyltransferase (185 aa).

The protein belongs to the NadD family.

The catalysed reaction is nicotinate beta-D-ribonucleotide + ATP + H(+) = deamido-NAD(+) + diphosphate. The protein operates within cofactor biosynthesis; NAD(+) biosynthesis; deamido-NAD(+) from nicotinate D-ribonucleotide: step 1/1. Functionally, catalyzes the reversible adenylation of nicotinate mononucleotide (NaMN) to nicotinic acid adenine dinucleotide (NaAD). This is Probable nicotinate-nucleotide adenylyltransferase from Cereibacter sphaeroides (strain ATCC 17025 / ATH 2.4.3) (Rhodobacter sphaeroides).